Consider the following 715-residue polypeptide: Polyribonucleotide nucleotidyltransferase (715 aa).

The Mg(2+) site is built by D497 and D503. Positions 564–623 constitute a KH domain; sequence PRLLTMKIDPEQIGLVIGPGGKTIKSITEQTGSKIDIADDGTVTIAAIQAKKAERARDLI. An S1 motif domain is found at 633–701; the sequence is GEVYLGRVTR…NKGRLNLTRL (69 aa).

The protein belongs to the polyribonucleotide nucleotidyltransferase family. Requires Mg(2+) as cofactor.

The protein resides in the cytoplasm. It catalyses the reaction RNA(n+1) + phosphate = RNA(n) + a ribonucleoside 5'-diphosphate. Its function is as follows. Involved in mRNA degradation. Catalyzes the phosphorolysis of single-stranded polyribonucleotides processively in the 3'- to 5'-direction. This is Polyribonucleotide nucleotidyltransferase from Crocosphaera subtropica (strain ATCC 51142 / BH68) (Cyanothece sp. (strain ATCC 51142)).